Here is a 953-residue protein sequence, read N- to C-terminus: 26S proteasome non-ATPase regulatory subunit 1 (953 aa).

Met1 is modified (N-acetylmethionine). Thr273 is subject to Phosphothreonine. Residues 279-318 (PGSTNTGTVPGSEKDSDSMETEEKTSSAFVGKTPEASPEP) are disordered. Ser290 carries the post-translational modification Phosphoserine. Positions 290–303 (SEKDSDSMETEEKT) are enriched in basic and acidic residues. Position 310 is an N6-acetyllysine (Lys310). Thr311 bears the Phosphothreonine mark. Ser315 carries the post-translational modification Phosphoserine. PC repeat units follow at residues 403 to 436 (TATA…PGSA), 441 to 474 (GGLY…DIVR), 476 to 510 (GGSL…VTGE), 511 to 545 (AAGL…EKIL), 547 to 580 (GLAV…ILRR), 581 to 616 (SGMY…DVRR), 617 to 649 (AAVE…PHVR), 651 to 685 (GAAM…YVRQ), 686 to 726 (GALI…DVMA), and 729 to 761 (GAIL…PSVV). Lys720 is modified (N6-acetyllysine). Position 830 is a phosphothreonine (Thr830). A Phosphoserine modification is found at Ser834. Disordered stretches follow at residues 839–881 (AKKK…LDNP) and 930–953 (AHGP…YIDD). Basic and acidic residues-rich tracts occupy residues 842–852 (KEKEKEKKEEE) and 859–872 (AEKK…KEPE). Residues 936 to 953 (EEEEQEPEPPEPFEYIDD) show a composition bias toward acidic residues.

This sequence belongs to the proteasome subunit S1 family. In terms of assembly, component of the 19S proteasome regulatory particle complex. The 26S proteasome consists of a 20S core particle (CP) and two 19S regulatory subunits (RP). The regulatory particle is made of a lid composed of 9 subunits, a base containing 6 ATPases and few additional components including PSMD1. Interacts with ADRM1. Interacts with ZFAND1.

Functionally, component of the 26S proteasome, a multiprotein complex involved in the ATP-dependent degradation of ubiquitinated proteins. This complex plays a key role in the maintenance of protein homeostasis by removing misfolded or damaged proteins, which could impair cellular functions, and by removing proteins whose functions are no longer required. Therefore, the proteasome participates in numerous cellular processes, including cell cycle progression, apoptosis, or DNA damage repair. This chain is 26S proteasome non-ATPase regulatory subunit 1 (PSMD1), found in Homo sapiens (Human).